The primary structure comprises 226 residues: Thiamine-phosphate synthase (226 aa).

4-amino-2-methyl-5-(diphosphooxymethyl)pyrimidine is bound by residues 46 to 50 (QFRDK) and D83. Residues D84 and D103 each contribute to the Mg(2+) site. A 4-amino-2-methyl-5-(diphosphooxymethyl)pyrimidine-binding site is contributed by S122. 149–151 (TQS) contacts 2-[(2R,5Z)-2-carboxy-4-methylthiazol-5(2H)-ylidene]ethyl phosphate. K152 is a binding site for 4-amino-2-methyl-5-(diphosphooxymethyl)pyrimidine. Residues G181 and 201-202 (IT) each bind 2-[(2R,5Z)-2-carboxy-4-methylthiazol-5(2H)-ylidene]ethyl phosphate.

This sequence belongs to the thiamine-phosphate synthase family. The cofactor is Mg(2+).

The enzyme catalyses 2-[(2R,5Z)-2-carboxy-4-methylthiazol-5(2H)-ylidene]ethyl phosphate + 4-amino-2-methyl-5-(diphosphooxymethyl)pyrimidine + 2 H(+) = thiamine phosphate + CO2 + diphosphate. The catalysed reaction is 2-(2-carboxy-4-methylthiazol-5-yl)ethyl phosphate + 4-amino-2-methyl-5-(diphosphooxymethyl)pyrimidine + 2 H(+) = thiamine phosphate + CO2 + diphosphate. It catalyses the reaction 4-methyl-5-(2-phosphooxyethyl)-thiazole + 4-amino-2-methyl-5-(diphosphooxymethyl)pyrimidine + H(+) = thiamine phosphate + diphosphate. The protein operates within cofactor biosynthesis; thiamine diphosphate biosynthesis; thiamine phosphate from 4-amino-2-methyl-5-diphosphomethylpyrimidine and 4-methyl-5-(2-phosphoethyl)-thiazole: step 1/1. In terms of biological role, condenses 4-methyl-5-(beta-hydroxyethyl)thiazole monophosphate (THZ-P) and 2-methyl-4-amino-5-hydroxymethyl pyrimidine pyrophosphate (HMP-PP) to form thiamine monophosphate (TMP). The protein is Thiamine-phosphate synthase of Haemophilus influenzae (strain ATCC 51907 / DSM 11121 / KW20 / Rd).